Here is a 336-residue protein sequence, read N- to C-terminus: MKLILPKDYHPTLTVRDTEAAIVYIRETFQDKLASILGVQRMSAPMFVEKASGLNDNLNGVERPVGFDMKAIPDSEIEVVHSLAKWKRLALKRYGFGMHEGLYTNMNAIRRDEDLDNFHSIYVDQWDWEKIIAKEERNTDTLEVTVMKIFKAIKATEKLVTARYPGSTYRLGDHVSFITTQELEDRWPELSPEERENKIAKEEKAVFIMKIGDKLKRSGKPHDGRAPDYDDWQLNGDLIFWYEPLQSKIEVSSMGIRVSEESLREQLKKAHCEDREKLPFHKMLLEGKLPYTIGGGIGQSRLCMLLLGKAHIGEVQASIWPEEMIEKCESDHIHLL.

Belongs to the class-II aminoacyl-tRNA synthetase family. AsnA subfamily.

It is found in the cytoplasm. The catalysed reaction is L-aspartate + NH4(+) + ATP = L-asparagine + AMP + diphosphate + H(+). Its pathway is amino-acid biosynthesis; L-asparagine biosynthesis; L-asparagine from L-aspartate (ammonia route): step 1/1. This chain is Aspartate--ammonia ligase, found in Lactobacillus acidophilus (strain ATCC 700396 / NCK56 / N2 / NCFM).